The chain runs to 115 residues: Replication initiation control protein YabA (115 aa).

Residues histidine 90, cysteine 92, cysteine 106, and cysteine 109 each coordinate Zn(2+).

This sequence belongs to the YabA family. In terms of assembly, homotetramer. Interacts with both DnaA and DnaN, acting as a bridge between these two proteins. Zn(2+) serves as cofactor.

It is found in the cytoplasm. The protein resides in the nucleoid. Its function is as follows. Involved in control of chromosome replication initiation. Inhibits the cooperative binding of DnaA to the oriC region, thus negatively regulating initiation of chromosome replication. Inhibits the ability of DnaA-ATP to form a helix on DNA; does not disassemble preformed DnaA-DNA helices. Decreases the residence time of DnaA on the chromosome at its binding sites (oriC, replication forks and promoter-binding sites). Tethers DnaA to the replication machinery via the DNA polymerase beta sliding clamp subunit (dnaN). Associates with oriC and other DnaA targets on the chromosome in a DnaA-dependent manner. This Staphylococcus aureus (strain JH1) protein is Replication initiation control protein YabA.